Consider the following 500-residue polypeptide: NAD(P)H-quinone oxidoreductase chain 4, chloroplastic (500 aa).

The next 14 membrane-spanning stretches (helical) occupy residues 4-24 (FPWL…IFFL), 35-55 (YTIC…CYHF), 87-107 (IGPI…AWPI), 113-130 (LFHF…GSFS), 134-154 (LLLF…LLCM), 167-187 (FILY…GVAL), 208-228 (VLEI…SPII), 242-262 (HYST…YGLI), 272-292 (AHSI…IYAA), 305-325 (IAYS…SLTD), 330-350 (GALL…FLAG), 386-406 (LALP…GIIT), 411-431 (LLIP…LTPI), and 462-482 (LFLS…PDFV).

The protein belongs to the complex I subunit 4 family.

It localises to the plastid. The protein localises to the chloroplast thylakoid membrane. It carries out the reaction a plastoquinone + NADH + (n+1) H(+)(in) = a plastoquinol + NAD(+) + n H(+)(out). The enzyme catalyses a plastoquinone + NADPH + (n+1) H(+)(in) = a plastoquinol + NADP(+) + n H(+)(out). The chain is NAD(P)H-quinone oxidoreductase chain 4, chloroplastic from Nicotiana tomentosiformis (Tobacco).